The primary structure comprises 423 residues: Glycine amidinotransferase, mitochondrial (423 aa).

The N-terminal 43 residues, 1 to 43, are a transit peptide targeting the mitochondrion; that stretch reads MLRVRCLRGGSRGAEALHYIGSRLGRTVTGWVQRTFQSTQAAT. Phosphoserine occurs at positions 46 and 49. D170 lines the arginine pocket. Residues D254 and H303 contribute to the active site. Arginine-binding residues include D305, R322, S354, and S355. At K385 the chain carries N6-acetyllysine. C407 serves as the catalytic Amidino-cysteine intermediate.

The protein belongs to the amidinotransferase family. As to quaternary structure, homodimer.

It localises to the mitochondrion inner membrane. It catalyses the reaction L-arginine + glycine = guanidinoacetate + L-ornithine. It carries out the reaction 4-aminobutanoate + L-arginine = 4-guanidinobutanoate + L-ornithine. The catalysed reaction is beta-alanine + L-arginine = 3-guanidinopropanoate + L-ornithine. The enzyme catalyses taurine + L-arginine = taurocyamine + L-ornithine. The protein operates within amine and polyamine biosynthesis; creatine biosynthesis; creatine from L-arginine and glycine: step 1/2. Transamidinase that catalyzes the transfer of the amidino group of L-arginine onto the amino moiety of acceptor metabolites such as glycine, beta-alanine, gamma-aminobutyric acid (GABA) and taurine yielding the corresponding guanidine derivatives. Catalyzes the rate-limiting step of creatine biosynthesis, namely the transfer of the amidino group from L-arginine to glycine to generate guanidinoacetate, which is then methylated by GAMT to form creatine. Provides creatine as a source for ATP generation in tissues with high energy demands, in particular skeletal muscle, heart and brain. The sequence is that of Glycine amidinotransferase, mitochondrial (GATM) from Bos taurus (Bovine).